A 718-amino-acid chain; its full sequence is Phospholipid phosphatase-related protein type 3 (718 aa).

3 helical membrane-spanning segments follow: residues 18–38, 70–90, and 133–153; these read LPCF…SLYF, LIPL…SIMV, and FVGV…VIQL. An N-linked (GlcNAc...) asparagine glycan is attached at Asn169. Helical transmembrane passes span 207-227, 233-253, and 263-283; these read HATL…SVIS, LKPI…LTQI, and VYAG…HAVG. The disordered stretch occupies residues 313–347; the sequence is SVYQQNKSVSTDELGPPGRLEGAPRPVAREKTSLG. Residues 314-323 are compositionally biased toward polar residues; sequence VYQQNKSVST. N-linked (GlcNAc...) asparagine glycosylation occurs at Asn318. A phosphoserine mark is found at Ser322 and Ser353. Thr376 bears the Phosphothreonine mark. Positions 416–488 are disordered; that stretch reads LEGRGLGLPD…GPRVILPPRA (73 aa). At Ser428 the chain carries Phosphoserine. A compositionally biased stretch (acidic residues) spans 439 to 462; sequence MAEEEEEEEDEEEEEEEEEEEDEG. Ser508 bears the Phosphoserine mark. Residues 545–571 show a composition bias toward low complexity; sequence APGAPGPKAAETASSSSASSDSSQYRS. Residues 545 to 577 form a disordered region; that stretch reads APGAPGPKAAETASSSSASSDSSQYRSPSDRDS. Ser641 bears the Phosphoserine mark. Low complexity predominate over residues 664–680; sequence GEGLPPLGAADGALGPG. The segment at 664–702 is disordered; the sequence is GEGLPPLGAADGALGPGSRESTLRRHAGGLGLAEREAEA.

It belongs to the PA-phosphatase related phosphoesterase family.

The protein localises to the membrane. This is Phospholipid phosphatase-related protein type 3 from Homo sapiens (Human).